Here is a 191-residue protein sequence, read N- to C-terminus: Elongation factor P-like protein (191 aa).

The protein belongs to the elongation factor P family.

The chain is Elongation factor P-like protein from Shewanella sediminis (strain HAW-EB3).